A 671-amino-acid polypeptide reads, in one-letter code: DNA ligase (671 aa).

NAD(+) contacts are provided by residues 32 to 36 (DAEYD), 81 to 82 (SL), and E113. K115 serves as the catalytic N6-AMP-lysine intermediate. R136, E173, K290, and K314 together coordinate NAD(+). Zn(2+) contacts are provided by C408, C411, C426, and C432. One can recognise a BRCT domain in the interval 593 to 671 (EIDSPFAGKT…EAEMIRLLDA (79 aa)).

This sequence belongs to the NAD-dependent DNA ligase family. LigA subfamily. Requires Mg(2+) as cofactor. Mn(2+) serves as cofactor.

It carries out the reaction NAD(+) + (deoxyribonucleotide)n-3'-hydroxyl + 5'-phospho-(deoxyribonucleotide)m = (deoxyribonucleotide)n+m + AMP + beta-nicotinamide D-nucleotide.. Its function is as follows. DNA ligase that catalyzes the formation of phosphodiester linkages between 5'-phosphoryl and 3'-hydroxyl groups in double-stranded DNA using NAD as a coenzyme and as the energy source for the reaction. It is essential for DNA replication and repair of damaged DNA. In Salmonella schwarzengrund (strain CVM19633), this protein is DNA ligase.